Consider the following 113-residue polypeptide: Large ribosomal subunit protein uL22 (113 aa).

It belongs to the universal ribosomal protein uL22 family. In terms of assembly, part of the 50S ribosomal subunit.

In terms of biological role, this protein binds specifically to 23S rRNA; its binding is stimulated by other ribosomal proteins, e.g. L4, L17, and L20. It is important during the early stages of 50S assembly. It makes multiple contacts with different domains of the 23S rRNA in the assembled 50S subunit and ribosome. Functionally, the globular domain of the protein is located near the polypeptide exit tunnel on the outside of the subunit, while an extended beta-hairpin is found that lines the wall of the exit tunnel in the center of the 70S ribosome. The protein is Large ribosomal subunit protein uL22 of Anoxybacillus flavithermus (strain DSM 21510 / WK1).